Here is a 515-residue protein sequence, read N- to C-terminus: MDGKLIAKLLLIAAVIGFCIHLATPLNEKIALGLDLQGGMHLALDVDTEQAVERKLDAMTNALRLEAQQQHLVIGTIQRRGMQILIPVPYAEEKAEFKRLMQRRYGQLELQDEQPELLVYGYTTYDIEEIKELAVGQALETIRNRIDQFGVSEPTVQKQGDRRIIIELPGVEDVDRAVELIGRTAMLEFRLVNENVSTRDALDGFLPENSEVLYQRHMDPQTNTEVDRTPFVLYRDVIFTGDRLLDARVRFDPQFNTPYVSITLDGEGARLFADVTGRNVGRRLAIVLDGHVHSAPVINERIPSGQASISGQFTMEQATDLSIVLRSGSLPAPVDIVENRTVGPTLGQDSIDKGILSVTIGMALVLLFMVAYYRLSGLLANMALLMNLIILMGLLAYFGATLTLPGIAGIILTIGIAVDANVLIFERIREELRRGASPRLAIEEGYAKAFSTILDANITTLIVAVILFQFGTGPIKGFAVTLSIGILASMFTAILCTRAIYELILVYKPIRKLSI.

6 helical membrane-spanning segments follow: residues 5–25 (LIAKLLLIAAVIGFCIHLATP), 353–373 (KGILSVTIGMALVLLFMVAYY), 375–395 (LSGLLANMALLMNLIILMGLL), 398–418 (FGATLTLPGIAGIILTIGIAV), 450–470 (FSTILDANITTLIVAVILFQF), and 477–497 (GFAVTLSIGILASMFTAILCT).

It belongs to the SecD/SecF family. SecD subfamily. In terms of assembly, forms a complex with SecF. Part of the essential Sec protein translocation apparatus which comprises SecA, SecYEG and auxiliary proteins SecDF. Other proteins may also be involved.

It localises to the cell inner membrane. Functionally, part of the Sec protein translocase complex. Interacts with the SecYEG preprotein conducting channel. SecDF uses the proton motive force (PMF) to complete protein translocation after the ATP-dependent function of SecA. This is Protein translocase subunit SecD from Desulfurispirillum indicum (strain ATCC BAA-1389 / DSM 22839 / S5).